A 534-amino-acid chain; its full sequence is Probable RNA-binding protein 46 (534 aa).

RRM domains are found at residues 61 to 139, 141 to 223, and 236 to 308; these read CEVF…VSLD, CRLF…WASP, and KVLY…LAKP.

It localises to the cytoplasm. Its function is as follows. Essential for male and female fertility, playing a crucial role in regulating germ cell development by ensuring the proper progression of meiosis prophase I. The chain is Probable RNA-binding protein 46 (rbm46) from Xenopus tropicalis (Western clawed frog).